Consider the following 543-residue polypeptide: CTP synthase (543 aa).

Positions 1-267 are amidoligase domain; that stretch reads MKQTKYIFVT…LSPIAEILDL (267 aa). Ser-15 is a binding site for CTP. Ser-15 serves as a coordination point for UTP. Residues 16–21 and Asp-73 contribute to the ATP site; that span reads SLGKGI. 2 residues coordinate Mg(2+): Asp-73 and Glu-141. CTP contacts are provided by residues 148–150, 188–193, and Lys-224; these read DIE and KTKPTQ. UTP is bound by residues 188 to 193 and Lys-224; that span reads KTKPTQ. One can recognise a Glutamine amidotransferase type-1 domain in the interval 292–543; sequence KIAFVGKYVD…IKAAINYEDN (252 aa). Gly-354 contributes to the L-glutamine binding site. The Nucleophile; for glutamine hydrolysis role is filled by Cys-381. L-glutamine-binding positions include 382 to 385, Glu-405, and Arg-473; that span reads LGMQ. Residues His-516 and Glu-518 contribute to the active site.

Belongs to the CTP synthase family. As to quaternary structure, homotetramer.

It catalyses the reaction UTP + L-glutamine + ATP + H2O = CTP + L-glutamate + ADP + phosphate + 2 H(+). It carries out the reaction L-glutamine + H2O = L-glutamate + NH4(+). The catalysed reaction is UTP + NH4(+) + ATP = CTP + ADP + phosphate + 2 H(+). The protein operates within pyrimidine metabolism; CTP biosynthesis via de novo pathway; CTP from UDP: step 2/2. Allosterically activated by GTP, when glutamine is the substrate; GTP has no effect on the reaction when ammonia is the substrate. The allosteric effector GTP functions by stabilizing the protein conformation that binds the tetrahedral intermediate(s) formed during glutamine hydrolysis. Inhibited by the product CTP, via allosteric rather than competitive inhibition. In terms of biological role, catalyzes the ATP-dependent amination of UTP to CTP with either L-glutamine or ammonia as the source of nitrogen. Regulates intracellular CTP levels through interactions with the four ribonucleotide triphosphates. The chain is CTP synthase from Campylobacter jejuni subsp. jejuni serotype O:23/36 (strain 81-176).